The primary structure comprises 380 residues: Probable protein phosphatase 2C 34 (380 aa).

The PPM-type phosphatase domain occupies 32–335 (AAGEFSMAAA…DDISVIVVYL (304 aa)). The Mn(2+) site is built by D66, G67, D267, and D326.

The protein belongs to the PP2C family. Requires Mg(2+) as cofactor. Mn(2+) serves as cofactor.

The enzyme catalyses O-phospho-L-seryl-[protein] + H2O = L-seryl-[protein] + phosphate. The catalysed reaction is O-phospho-L-threonyl-[protein] + H2O = L-threonyl-[protein] + phosphate. This Oryza sativa subsp. indica (Rice) protein is Probable protein phosphatase 2C 34 (BIPP2C2).